Reading from the N-terminus, the 352-residue chain is N-acetyl-gamma-glutamyl-phosphate reductase (352 aa).

C155 is a catalytic residue.

This sequence belongs to the NAGSA dehydrogenase family. Type 1 subfamily.

The protein localises to the cytoplasm. The enzyme catalyses N-acetyl-L-glutamate 5-semialdehyde + phosphate + NADP(+) = N-acetyl-L-glutamyl 5-phosphate + NADPH + H(+). It participates in amino-acid biosynthesis; L-arginine biosynthesis; N(2)-acetyl-L-ornithine from L-glutamate: step 3/4. Functionally, catalyzes the NADPH-dependent reduction of N-acetyl-5-glutamyl phosphate to yield N-acetyl-L-glutamate 5-semialdehyde. The sequence is that of N-acetyl-gamma-glutamyl-phosphate reductase from Acaryochloris marina (strain MBIC 11017).